Here is a 139-residue protein sequence, read N- to C-terminus: MSSEKEYVEMLDRLYSKLPEKGRKEGTQSLPNMIILNIGNTTIIRNFAEYCDRIRREDKICMKYLLKELAAPGNVDDKGELVIQGKFSSQVINTLMERFLKAYVECSTCKSLDTILKKEKKSWYIVCLACGAQTPVKPL.

Belongs to the eIF-2-beta/eIF-5 family. As to quaternary structure, heterotrimer composed of an alpha, a beta and a gamma chain.

In terms of biological role, eIF-2 functions in the early steps of protein synthesis by forming a ternary complex with GTP and initiator tRNA. This is Translation initiation factor 2 subunit beta from Saccharolobus solfataricus (strain ATCC 35092 / DSM 1617 / JCM 11322 / P2) (Sulfolobus solfataricus).